We begin with the raw amino-acid sequence, 376 residues long: NAD-capped RNA hydrolase (376 aa).

Cysteine 182, cysteine 185, cysteine 200, and cysteine 211 together coordinate Zn(2+). Substrate-binding positions include tyrosine 222, 258–260 (AGF), glutamate 274, glutamate 278, and glutamate 321. Residues 223-351 (PRTDPCVIMV…KDGPAPILFP (129 aa)) form the Nudix hydrolase domain. Positions 258, 274, 278, and 321 each coordinate Mg(2+). A Nudix box motif is present at residues 259-280 (GFLEPGESLEEAVVRETYEESG). The short motif at 374-376 (VKM) is the Microbody targeting signal element.

This sequence belongs to the Nudix hydrolase family. NudC subfamily. As to quaternary structure, homodimer. Mg(2+) serves as cofactor. Requires Zn(2+) as cofactor.

The enzyme catalyses a 5'-end NAD(+)-phospho-ribonucleoside in mRNA + H2O = a 5'-end phospho-adenosine-phospho-ribonucleoside in mRNA + beta-nicotinamide D-ribonucleotide + 2 H(+). The catalysed reaction is NAD(+) + H2O = beta-nicotinamide D-ribonucleotide + AMP + 2 H(+). It catalyses the reaction NADH + H2O = reduced beta-nicotinamide D-ribonucleotide + AMP + 2 H(+). Functionally, mRNA decapping enzyme that specifically removes the nicotinamide adenine dinucleotide (NAD) cap from a subset of mRNAs by hydrolyzing the diphosphate linkage to produce nicotinamide mononucleotide (NMN) and 5' monophosphate mRNA. The NAD-cap is present at the 5'-end of some RNAs; in contrast to the canonical N7 methylguanosine (m7G) cap, the NAD cap promotes mRNA decay. Mediates the hydrolysis of some nucleoside diphosphate derivatives. The protein is NAD-capped RNA hydrolase of Schizosaccharomyces pombe (strain 972 / ATCC 24843) (Fission yeast).